A 146-amino-acid polypeptide reads, in one-letter code: uncharacterized protein (146 aa).

Residues 67-93 (DDNGMESGFCSGATSTGQSASTSPAPV) are disordered. Positions 77–92 (SGATSTGQSASTSPAP) are enriched in low complexity.

This is an uncharacterized protein from Caenorhabditis elegans.